The primary structure comprises 182 residues: Large ribosomal subunit protein uL6 (182 aa).

It belongs to the universal ribosomal protein uL6 family. As to quaternary structure, part of the 50S ribosomal subunit.

Functionally, this protein binds to the 23S rRNA, and is important in its secondary structure. It is located near the subunit interface in the base of the L7/L12 stalk, and near the tRNA binding site of the peptidyltransferase center. The protein is Large ribosomal subunit protein uL6 of Dehalococcoides mccartyi (strain ATCC BAA-2100 / JCM 16839 / KCTC 5957 / BAV1).